The sequence spans 38 residues: Large ribosomal subunit protein bL36 (38 aa).

It belongs to the bacterial ribosomal protein bL36 family.

The protein is Large ribosomal subunit protein bL36 of Pseudothermotoga lettingae (strain ATCC BAA-301 / DSM 14385 / NBRC 107922 / TMO) (Thermotoga lettingae).